Consider the following 1097-residue polypeptide: Protein kinase C-like 1 (1097 aa).

REM-1 domains are found at residues 2–76 (STSQ…QMQR) and 106–183 (KYEC…FSIN). In terms of domain architecture, C2 spans 189–311 (RDYEIMDSTK…AKDQGSSGWL (123 aa)). Residues 304–359 (DQGSSGWLPAANLPQTGGSGAGTGSSMTGGASYGATSPLPAHNDLRPSVSPSSDAK) are disordered. A compositionally biased stretch (low complexity) spans 327 to 340 (GSSMTGGASYGATS). Phorbol-ester/DAG-type zinc fingers lie at residues 415 to 462 (GHQF…VTKC) and 480 to 530 (PHRF…PDFC). Disordered stretches follow at residues 548 to 594 (KVSP…LRPA), 615 to 646 (YQEP…LSFE), and 724 to 763 (ETSH…RRKR). The span at 574–583 (PSMDSEETLH) shows a compositional bias: basic and acidic residues. A compositionally biased stretch (low complexity) spans 730-741 (QQNQQVQQVQQQ). Basic residues predominate over residues 747–763 (QRTHSSGKSGKSKRRKR). The Protein kinase domain maps to 770–1029 (FQFLAVLGKG…AEEIMEHPYF (260 aa)). ATP contacts are provided by residues 776–784 (LGKGNFGKV) and lysine 799. Aspartate 895 functions as the Proton acceptor in the catalytic mechanism. Residues 1030-1097 (HDVNFDDVLN…FSHISDNATI (68 aa)) form the AGC-kinase C-terminal domain.

It belongs to the protein kinase superfamily. AGC Ser/Thr protein kinase family. PKC subfamily.

It carries out the reaction L-seryl-[protein] + ATP = O-phospho-L-seryl-[protein] + ADP + H(+). The enzyme catalyses L-threonyl-[protein] + ATP = O-phospho-L-threonyl-[protein] + ADP + H(+). Necessary for osmotic stability. The chain is Protein kinase C-like 1 (PKC1) from Candida albicans (Yeast).